Reading from the N-terminus, the 1119-residue chain is MEIKRFGRIREVIPLPPLTEIQVESYRRALQADVPPEKRENVGIQAAFRETFPIEEEDKGKGGLVLDFLEYRLGEPPFPQDECREKDLTYQAPLYARLQLIHKDTGLIKEDEVFLGHIPLMTEDGSFIINGADRVIVSQIHRSPGVYFTPDPARPGRYIASIIPLPKRGPWIDLEVEPNGVVSMKVNKRKFPLVLLLRVLGYDQETLARELGAYGELVQGLMDESVFAMRPEEALIRLFTLLRPGDPPKRDKAVAYVYGLIADPRRYDLGEAGRYKAEEKLGIRLSGRTLARFEDGEFKDEVFLPTLRYLFALTAGVPGHEVDDIDHLGNRRIRTVGELMTDQFRVGLARLARGVRERMLMGSEDSLTPAKLVNSRPLEAAIREFFSRSQLSQFKDETNPLSSLRHKRRISALGPGGLTRERAGFDVRDVHRTHYGRICPVETPEGANIGLITSLAAYARVDELGFIRTPYRRVVGGVVTDEVVYMTATEEDRYTIAQANTPLEGNRIAAERVVARRKGEPVIVSPEEVEFMDVSPKQVFSVNTNLIPFLEHDDANRALMGSNMQTQAVPLIRAQAPVVMTGLEERVVRDSLAALYAEEDGEVAKVDGNRIVVRYEDGRLVEYPLRRFYRSNQGTALDQRPRVVVGQRVRKGDLLADGPASENGFLALGQNVLVAIMPFDGYNFEDAIVISEELLKRDFYTSIHIERYEIEARDTKLGPERITRDIPHLSEAALRDLDEEGVVRIGAEVKPGDILVGRTSFKGESEPTPEERLLRSIFGEKARDVKDTSLRVPPGEGGIVVRTVRLRRGDPGVELKPGVREVVRVYVAQKRKLQVGDKLANRHGNKGVVAKILPVEDMPHLPDGTPVDVILNPLGVPSRMNLGQILETHLGLAGYFLGQRYISPIFDGAKEPEIKELLAQAFEVYFGKRKGEGFGVDKREVEVLRRAEKLGLVTPGKTPEEQLKELFLQGKVVLYDGRTGEPIEGPIVVGQMFIMKLYHMVEDKMHARSTGPYSLITQQPLGGKAQFGGQRFGEMEVWALEAYGAAHTLQEMLTLKSDDIEGRNAAYEAIIKGEDVPEPSVPESFRVLVKELQALALDVQTLDEKDNPVDIFEGLASKR.

Belongs to the RNA polymerase beta chain family. In terms of assembly, the RNAP catalytic core consists of 2 alpha, 1 beta, 1 beta' and 1 omega subunit. When a sigma factor is associated with the core the holoenzyme is formed, which can initiate transcription.

It catalyses the reaction RNA(n) + a ribonucleoside 5'-triphosphate = RNA(n+1) + diphosphate. Its function is as follows. DNA-dependent RNA polymerase catalyzes the transcription of DNA into RNA using the four ribonucleoside triphosphates as substrates. The sequence is that of DNA-directed RNA polymerase subunit beta from Thermus thermophilus (strain ATCC 27634 / DSM 579 / HB8).